A 99-amino-acid chain; its full sequence is Aspartyl/glutamyl-tRNA(Asn/Gln) amidotransferase subunit C (99 aa).

Belongs to the GatC family. In terms of assembly, heterotrimer of A, B and C subunits.

It catalyses the reaction L-glutamyl-tRNA(Gln) + L-glutamine + ATP + H2O = L-glutaminyl-tRNA(Gln) + L-glutamate + ADP + phosphate + H(+). The catalysed reaction is L-aspartyl-tRNA(Asn) + L-glutamine + ATP + H2O = L-asparaginyl-tRNA(Asn) + L-glutamate + ADP + phosphate + 2 H(+). Functionally, allows the formation of correctly charged Asn-tRNA(Asn) or Gln-tRNA(Gln) through the transamidation of misacylated Asp-tRNA(Asn) or Glu-tRNA(Gln) in organisms which lack either or both of asparaginyl-tRNA or glutaminyl-tRNA synthetases. The reaction takes place in the presence of glutamine and ATP through an activated phospho-Asp-tRNA(Asn) or phospho-Glu-tRNA(Gln). This is Aspartyl/glutamyl-tRNA(Asn/Gln) amidotransferase subunit C from Corynebacterium diphtheriae (strain ATCC 700971 / NCTC 13129 / Biotype gravis).